Reading from the N-terminus, the 141-residue chain is Transcription antitermination protein NusB (141 aa).

It belongs to the NusB family.

Functionally, involved in transcription antitermination. Required for transcription of ribosomal RNA (rRNA) genes. Binds specifically to the boxA antiterminator sequence of the ribosomal RNA (rrn) operons. The polypeptide is Transcription antitermination protein NusB (Neisseria meningitidis serogroup C (strain 053442)).